The sequence spans 591 residues: Probable lysosomal cobalamin transporter (591 aa).

Helical transmembrane passes span leucine 8–valine 28, alanine 39–isoleucine 59, isoleucine 95–threonine 115, tryptophan 144–phenylalanine 164, and phenylalanine 198–leucine 218. Residues threonine 238–arginine 266 are disordered. Over residues threonine 244–arginine 266 the composition is skewed to basic and acidic residues. The next 4 helical transmembrane spans lie at leucine 315–threonine 335, valine 378–alanine 398, methionine 422–valine 442, and phenylalanine 509–phenylalanine 529.

This sequence belongs to the LIMR family. LMBRD1 subfamily.

The protein localises to the lysosome membrane. In terms of biological role, probable lysosomal cobalamin transporter. Required to export cobalamin from lysosomes allowing its conversion to cofactors. This is Probable lysosomal cobalamin transporter from Pyrenophora tritici-repentis (strain Pt-1C-BFP) (Wheat tan spot fungus).